The following is a 219-amino-acid chain: Small ribosomal subunit protein uS3 (219 aa).

The 69-residue stretch at 39–107 folds into the KH type-2 domain; that stretch reads LRKFLKKKLH…EVLIDIQEVR (69 aa).

It belongs to the universal ribosomal protein uS3 family. In terms of assembly, part of the 30S ribosomal subunit. Forms a tight complex with proteins S10 and S14.

Functionally, binds the lower part of the 30S subunit head. Binds mRNA in the 70S ribosome, positioning it for translation. The chain is Small ribosomal subunit protein uS3 from Desulfatibacillum aliphaticivorans.